Consider the following 126-residue polypeptide: Urease subunit beta (126 aa).

This sequence belongs to the urease beta subunit family. Heterotrimer of UreA (gamma), UreB (beta) and UreC (alpha) subunits. Three heterotrimers associate to form the active enzyme.

The protein localises to the cytoplasm. The enzyme catalyses urea + 2 H2O + H(+) = hydrogencarbonate + 2 NH4(+). It participates in nitrogen metabolism; urea degradation; CO(2) and NH(3) from urea (urease route): step 1/1. The chain is Urease subunit beta from Haloquadratum walsbyi (strain DSM 16790 / HBSQ001).